A 147-amino-acid chain; its full sequence is Large ribosomal subunit protein uL13 (147 aa).

The protein belongs to the universal ribosomal protein uL13 family. As to quaternary structure, part of the 50S ribosomal subunit.

This protein is one of the early assembly proteins of the 50S ribosomal subunit, although it is not seen to bind rRNA by itself. It is important during the early stages of 50S assembly. This is Large ribosomal subunit protein uL13 from Mycobacterium marinum (strain ATCC BAA-535 / M).